The chain runs to 297 residues: Undecaprenyl-diphosphatase 3 (297 aa).

A run of 6 helical transmembrane segments spans residues 39 to 59 (PGAAFTAVTQIGTETAVLIYF), 89 to 109 (WLVLLGTIPIGLLGVTLQDAI), 118 to 138 (LIATTLIVLGLILGGADWYAS), 203 to 223 (FLLAMPAVLASGVFELKSIGG), 237 to 257 (PTIVATVVAFATGYAAIAWFL), and 268 to 288 (FVLYRVALGLLLLALLAGGAI).

The protein belongs to the UppP family.

It localises to the cell membrane. The enzyme catalyses di-trans,octa-cis-undecaprenyl diphosphate + H2O = di-trans,octa-cis-undecaprenyl phosphate + phosphate + H(+). Catalyzes the dephosphorylation of undecaprenyl diphosphate (UPP). Confers resistance to bacitracin. In Frankia alni (strain DSM 45986 / CECT 9034 / ACN14a), this protein is Undecaprenyl-diphosphatase 3.